The following is a 563-amino-acid chain: Anaerobic glycerol-3-phosphate dehydrogenase subunit A (563 aa).

20-48 (DVIIIGGGATGAGIARDCALRGIDCILLE) contributes to the FAD binding site.

The protein belongs to the FAD-dependent glycerol-3-phosphate dehydrogenase family. As to quaternary structure, composed of a catalytic GlpA/B dimer and of membrane bound GlpC. FAD serves as cofactor. Requires FMN as cofactor.

It localises to the cell inner membrane. It catalyses the reaction a quinone + sn-glycerol 3-phosphate = dihydroxyacetone phosphate + a quinol. It participates in polyol metabolism; glycerol degradation via glycerol kinase pathway; glycerone phosphate from sn-glycerol 3-phosphate (anaerobic route): step 1/1. In Haemophilus influenzae (strain ATCC 51907 / DSM 11121 / KW20 / Rd), this protein is Anaerobic glycerol-3-phosphate dehydrogenase subunit A (glpA).